Consider the following 1173-residue polypeptide: Paired amphipathic helix protein Sin3-like 6 (1173 aa).

Residues 40 to 75 (NQSAGESGRRLKMKRAREDVHTDTQKRKPEVSSRGE) are disordered. Residues 55-75 (AREDVHTDTQKRKPEVSSRGE) are compositionally biased toward basic and acidic residues. PAH domains follow at residues 79–148 (LPRT…LPKG) and 162–232 (IRVD…LPNC). Disordered regions lie at residues 236-337 (APST…TTKY), 655-697 (TASG…TAQP), and 740-813 (KHEL…ENNK). Basic and acidic residues-rich tracts occupy residues 264 to 276 (CKLE…SDQR) and 301 to 319 (RDYE…RTEK). Residues 320 to 337 (SAASGSQDIGNHKSTTKY) show a composition bias toward polar residues. Polar residues predominate over residues 750–765 (PTASREQSNFEVNGQN). Residues 778–810 (RSNKDKQSCDKKGAKNKTRAEDDKQENCHKLSE) show a composition bias toward basic and acidic residues.

It localises to the nucleus. Functionally, acts as a transcriptional repressor. Plays roles in regulating gene expression and genome stability. The polypeptide is Paired amphipathic helix protein Sin3-like 6 (SNL6) (Arabidopsis thaliana (Mouse-ear cress)).